The following is a 652-amino-acid chain: Acetyl-coenzyme A synthetase (652 aa).

CoA-binding positions include 191-194 (RAGR), Thr-311, and Asn-335. ATP contacts are provided by residues 387-389 (GEP), 411-416 (DTWWQT), Asp-500, and Arg-515. Ser-523 contacts CoA. Arg-526 provides a ligand contact to ATP. Mg(2+) is bound by residues Val-537, His-539, and Ile-542. Arg-584 is a binding site for CoA. Lys-609 bears the N6-acetyllysine mark.

Belongs to the ATP-dependent AMP-binding enzyme family. Requires Mg(2+) as cofactor. Post-translationally, acetylated. Deacetylation by the SIR2-homolog deacetylase activates the enzyme.

It carries out the reaction acetate + ATP + CoA = acetyl-CoA + AMP + diphosphate. In terms of biological role, catalyzes the conversion of acetate into acetyl-CoA (AcCoA), an essential intermediate at the junction of anabolic and catabolic pathways. Acs undergoes a two-step reaction. In the first half reaction, Acs combines acetate with ATP to form acetyl-adenylate (AcAMP) intermediate. In the second half reaction, it can then transfer the acetyl group from AcAMP to the sulfhydryl group of CoA, forming the product AcCoA. Enables the cell to use acetate during aerobic growth to generate energy via the TCA cycle, and biosynthetic compounds via the glyoxylate shunt. Acetylates CheY, the response regulator involved in flagellar movement and chemotaxis. The protein is Acetyl-coenzyme A synthetase of Cronobacter sakazakii (strain ATCC BAA-894) (Enterobacter sakazakii).